The chain runs to 858 residues: Potassium transporter 7 (858 aa).

Acidic residues-rich tracts occupy residues 1–16 (MAEESSMEGSEKEEID) and 38–53 (QDDDDSEIGVDDDNDG). Residues 1 to 68 (MAEESSMEGS…LESDEDEIPE (68 aa)) are disordered. Topologically, residues 1–104 (MAEESSMEGS…DYEDLTVGRK (104 aa)) are cytoplasmic. A helical membrane pass occupies residues 105–125 (VLLAFQTLGVVFGDVGTSPLY). The Extracellular portion of the chain corresponds to 126–147 (TFSVMFSKSPVQEKEDVIGALS). A helical transmembrane segment spans residues 148 to 168 (LVLYTLLLVPLIKYVLVVLWA). Topologically, residues 169 to 232 (NDDGEGGTFA…KLENSLILKK (64 aa)) are cytoplasmic. Residues 233-253 (ILLVLVLAGTSMVIADGVVTP) traverse the membrane as a helical segment. Topologically, residues 254-269 (AMSVMSAVGGLKVGVD) are extracellular. A helical transmembrane segment spans residues 270–290 (VVEQDQVVMISVAFLVILFSL). The Cytoplasmic segment spans residues 291 to 297 (QKYGTSK). Residues 298 to 318 (MGLVVGPALLIWFCSLAGIGI) form a helical membrane-spanning segment. Topologically, residues 319-345 (YNLIKYDSSVYRAFNPVHIYYFFKRNS) are extracellular. The chain crosses the membrane as a helical span at residues 346–366 (INAWYALGGCILCATGSEALF). At 367 to 380 (ADLCYFSVRSVQLT) the chain is on the cytoplasmic side. A helical transmembrane segment spans residues 381-401 (FVCLVLPCLMLGYMGQAAYLM). Residues 402 to 413 (ENHADASQAFFS) are Extracellular-facing. Residues 414-434 (SVPGSAFWPVLFIANIAALIA) form a helical membrane-spanning segment. Residues 435 to 470 (SRTMTTATFSCIKQSTALGCFPRLKIIHTSRKFMGQ) are Cytoplasmic-facing. The chain crosses the membrane as a helical span at residues 471-491 (IYIPVLNWFLLAVCLVVVCSI). Residues 492-496 (SSIDE) are Extracellular-facing. A helical transmembrane segment spans residues 497–517 (IGNAYGMAELGVMMTTTILVT). Leucine 518 is a topological domain (cytoplasmic). A helical membrane pass occupies residues 519–539 (IMLLIWQINIVIVIAFLVVFL). The Extracellular segment spans residues 540–552 (GVELVFFSSVIAS). Residues 553 to 573 (VGDGSWIILVFAVIMFGIMYI) form a helical membrane-spanning segment. Over 574 to 858 (WNYGSKLRYE…LMQVGMTYMV (285 aa)) the chain is Cytoplasmic. A disordered region spans residues 707–731 (QERSLESDGNDDSDSEEDFPGSRVV). Residues 714–725 (DGNDDSDSEEDF) show a composition bias toward acidic residues. Residues serine 719 and serine 721 each carry the phosphoserine modification.

It belongs to the HAK/KUP transporter (TC 2.A.72.3) family.

The protein localises to the cell membrane. Probable potassium transporter. The chain is Potassium transporter 7 (POT7) from Arabidopsis thaliana (Mouse-ear cress).